A 525-amino-acid polypeptide reads, in one-letter code: Cytochrome P450 714A2 (525 aa).

Residues 1–3 (MES) lie on the Lumenal side of the membrane. Residues 4–24 (LVVHTVNAIWCIVIVGIFSVG) traverse the membrane as a helical; Signal-anchor for type III membrane protein segment. Residues 25-525 (YHVYGRAVVE…PQHGVVIRVV (501 aa)) lie on the Cytoplasmic side of the membrane. C475 contributes to the heme binding site.

This sequence belongs to the cytochrome P450 family. The cofactor is heme. As to expression, expressed in the shoot apical meristem (SAM) and petioles of young leaves, in the leaf margin and petiole vein of cotyledons, and at low levels in the filaments of developing flowers. Not detected in siliques.

It localises to the endoplasmic reticulum membrane. Its function is as follows. Involved in the inactivation of early gibberellin (GA) intermediates. This is Cytochrome P450 714A2 (CYP714A2) from Arabidopsis thaliana (Mouse-ear cress).